The following is a 249-amino-acid chain: Diaminopimelate epimerase (249 aa).

Substrate contacts are provided by asparagine 11 and asparagine 60. Residue cysteine 69 is the Proton donor of the active site. Residues 70–71, asparagine 164, and 182–183 each bind substrate; these read GN and ER. Residue cysteine 192 is the Proton acceptor of the active site. 193–194 serves as a coordination point for substrate; it reads GT.

It belongs to the diaminopimelate epimerase family. In terms of assembly, homodimer.

It localises to the cytoplasm. The catalysed reaction is (2S,6S)-2,6-diaminopimelate = meso-2,6-diaminopimelate. It participates in amino-acid biosynthesis; L-lysine biosynthesis via DAP pathway; DL-2,6-diaminopimelate from LL-2,6-diaminopimelate: step 1/1. Its function is as follows. Catalyzes the stereoinversion of LL-2,6-diaminopimelate (L,L-DAP) to meso-diaminopimelate (meso-DAP), a precursor of L-lysine and an essential component of the bacterial peptidoglycan. The chain is Diaminopimelate epimerase from Campylobacter lari (strain RM2100 / D67 / ATCC BAA-1060).